The chain runs to 498 residues: tRNA-guanine(15) transglycosylase (498 aa).

The active-site Nucleophile is aspartate 85. Aspartate 120 contacts substrate. Zn(2+) is bound by residues cysteine 275, cysteine 277, and cysteine 280.

It belongs to the archaeosine tRNA-ribosyltransferase family. Requires Zn(2+) as cofactor.

It catalyses the reaction guanosine(15) in tRNA + 7-cyano-7-deazaguanine = 7-cyano-7-carbaguanosine(15) in tRNA + guanine. Its pathway is tRNA modification; archaeosine-tRNA biosynthesis. Exchanges the guanine residue with 7-cyano-7-deazaguanine (preQ0) at position 15 in the dihydrouridine loop (D-loop) of archaeal tRNAs. This is tRNA-guanine(15) transglycosylase from Sulfolobus acidocaldarius (strain ATCC 33909 / DSM 639 / JCM 8929 / NBRC 15157 / NCIMB 11770).